Consider the following 342-residue polypeptide: MRVDLFDFELPTESIALRPAVPRESARLLQVTSQEMDDYHVADLPNLLQEGDLLIFNDTRVIPAYLEGKKNQARISANMIKREGLRQWQAFVRNAKRLKSDDIVDFGQDVSARVVHRNDDGSVLFEFLGNEPVEILLERAGNMPLPPYIAHKRPADQQDRQDYQTIFAEKEGAVAAPTASLHFTEELLQRLEEKGVKHTKVTLHVGAGTFLPMKVEDSDDHVMHSEWGQISAETANAINETKKQGGRVIATGTTSLRLIESAADETGLVHPFSDETDIFITPGYRFRVIDGLMTNFHLPKSTLFMLVSALMGREKMLAAYQHAIDTGYRFYSYGDSSLLLPK.

It belongs to the QueA family. As to quaternary structure, monomer.

The protein resides in the cytoplasm. It carries out the reaction 7-aminomethyl-7-carbaguanosine(34) in tRNA + S-adenosyl-L-methionine = epoxyqueuosine(34) in tRNA + adenine + L-methionine + 2 H(+). The protein operates within tRNA modification; tRNA-queuosine biosynthesis. In terms of biological role, transfers and isomerizes the ribose moiety from AdoMet to the 7-aminomethyl group of 7-deazaguanine (preQ1-tRNA) to give epoxyqueuosine (oQ-tRNA). In Zymomonas mobilis subsp. mobilis (strain ATCC 31821 / ZM4 / CP4), this protein is S-adenosylmethionine:tRNA ribosyltransferase-isomerase.